Consider the following 260-residue polypeptide: Indole-3-glycerol phosphate synthase (260 aa).

Belongs to the TrpC family.

The enzyme catalyses 1-(2-carboxyphenylamino)-1-deoxy-D-ribulose 5-phosphate + H(+) = (1S,2R)-1-C-(indol-3-yl)glycerol 3-phosphate + CO2 + H2O. It functions in the pathway amino-acid biosynthesis; L-tryptophan biosynthesis; L-tryptophan from chorismate: step 4/5. This chain is Indole-3-glycerol phosphate synthase, found in Chloroherpeton thalassium (strain ATCC 35110 / GB-78).